The chain runs to 480 residues: DnaJ homolog subfamily A member 3, mitochondrial (480 aa).

Arginine 58 bears the Omega-N-methylarginine; by CARM1 mark. Residues 93-158 (DYYQILGVPR…VKRKQYDAYG (66 aa)) enclose the J domain. Lysine 134 carries the N6-acetyllysine modification. The CR-type zinc finger occupies 223–301 (GVNKEFTVNI…CRGAGQAKQK (79 aa)). Residue cysteine 236 participates in Zn(2+) binding. 4 CXXCXGXG motif repeats span residues 236–243 (CERCDGKG), 253–260 (CHYCGGSG), 275–282 (CRRCGGRG), and 289–296 (CVVCRGAG). Arginine 238 carries the post-translational modification Omega-N-methylarginine; by CARM1. Cysteine 239, cysteine 253, cysteine 256, cysteine 275, cysteine 278, cysteine 289, and cysteine 292 together coordinate Zn(2+). An Omega-N-methylarginine; by CARM1 modification is found at arginine 293. The residue at position 398 (serine 398) is a Phosphoserine. Positions 437-468 (TVNGVTHTSTGGRTMDSSAGSKDRREAGEDNE) are disordered. Residues 439-456 (NGVTHTSTGGRTMDSSAG) are compositionally biased toward polar residues.

As to quaternary structure, interacts with JAK2, HSPA9B and IFN-gammaR2 chain. Interacts with Ras GTPase-activating protein 1 (RASA1). Isoform 2 interacts with MUSK (via the cytoplasmic domain). In terms of processing, tyrosine phosphorylated.

Its subcellular location is the mitochondrion matrix. It localises to the cytoplasm. It is found in the cytosol. The protein resides in the postsynaptic cell membrane. Functionally, modulates apoptotic signal transduction or effector structures within the mitochondrial matrix. Affect cytochrome C release from the mitochondria and caspase 3 activation, but not caspase 8 activation. Isoform 1 increases apoptosis triggered by both TNF and the DNA-damaging agent mytomycin C; in sharp contrast, isoform 2 suppresses apoptosis. Can modulate IFN-gamma-mediated transcriptional activity. Isoform 2 may play a role in neuromuscular junction development as an effector of the MUSK signaling pathway. This Mus musculus (Mouse) protein is DnaJ homolog subfamily A member 3, mitochondrial (Dnaja3).